Here is a 386-residue protein sequence, read N- to C-terminus: Small ribosomal subunit protein mS31 (386 aa).

It belongs to the mitochondrion-specific ribosomal protein mS31 family. Component of the mitochondrial ribosome small subunit (28S) which comprises a 12S rRNA and about 30 distinct proteins.

The protein resides in the mitochondrion. The sequence is that of Small ribosomal subunit protein mS31 (MRPS31) from Bos taurus (Bovine).